Consider the following 599-residue polypeptide: Retrotransposon Gag-like protein 5 (599 aa).

Disordered regions lie at residues 77–97 (DPTP…CWPP), 116–139 (DYTN…ELHS), and 377–450 (FPQE…EEDE). Residues 78-90 (PTPEEEEEEEEEV) show a composition bias toward acidic residues. Composition is skewed to acidic residues over residues 393 to 432 (DEME…EDKE) and 439 to 450 (DSDENKYEEEDE).

This is Retrotransposon Gag-like protein 5 from Mus musculus (Mouse).